Reading from the N-terminus, the 321-residue chain is Anthranilate phosphoribosyltransferase (321 aa).

5-phospho-alpha-D-ribose 1-diphosphate-binding positions include Gly-72, 75–76, Thr-80, 82–85, 99–107, and Ser-111; these read GD, NVST, and KHGNVSVTS. Gly-72 contributes to the anthranilate binding site. Ser-84 is a Mg(2+) binding site. Anthranilate is bound at residue Asn-102. Arg-157 is a binding site for anthranilate. Residues Asp-216 and Glu-217 each coordinate Mg(2+).

Belongs to the anthranilate phosphoribosyltransferase family. In terms of assembly, homodimer. The cofactor is Mg(2+).

It catalyses the reaction N-(5-phospho-beta-D-ribosyl)anthranilate + diphosphate = 5-phospho-alpha-D-ribose 1-diphosphate + anthranilate. It functions in the pathway amino-acid biosynthesis; L-tryptophan biosynthesis; L-tryptophan from chorismate: step 2/5. Functionally, catalyzes the transfer of the phosphoribosyl group of 5-phosphorylribose-1-pyrophosphate (PRPP) to anthranilate to yield N-(5'-phosphoribosyl)-anthranilate (PRA). The protein is Anthranilate phosphoribosyltransferase of Methanococcus vannielii (strain ATCC 35089 / DSM 1224 / JCM 13029 / OCM 148 / SB).